A 221-amino-acid polypeptide reads, in one-letter code: Ribosome maturation factor RimM (221 aa).

The interval M1–K23 is disordered. Positions E144 to Y221 constitute a PRC barrel domain.

The protein belongs to the RimM family. Binds ribosomal protein uS19.

The protein localises to the cytoplasm. Functionally, an accessory protein needed during the final step in the assembly of 30S ribosomal subunit, possibly for assembly of the head region. Essential for efficient processing of 16S rRNA. May be needed both before and after RbfA during the maturation of 16S rRNA. It has affinity for free ribosomal 30S subunits but not for 70S ribosomes. This is Ribosome maturation factor RimM from Cupriavidus pinatubonensis (strain JMP 134 / LMG 1197) (Cupriavidus necator (strain JMP 134)).